The sequence spans 322 residues: uncharacterized protein (322 aa).

Basic residues-rich tracts occupy residues 1–16 (MPGN…KSGT) and 43–61 (LRPH…RRPV). Residues 1 to 69 (MPGNSRRRGA…PVKRADETET (69 aa)) form a disordered region. S-adenosyl-L-methionine-binding residues include Gly-261, Ile-281, and Leu-290.

The protein belongs to the class IV-like SAM-binding methyltransferase superfamily. RNA methyltransferase TrmH family.

This is an uncharacterized protein from Mycobacterium tuberculosis (strain CDC 1551 / Oshkosh).